The following is a 1554-amino-acid chain: Lysine-specific demethylase 5C (1554 aa).

Residues 14–55 (CPVFEPSWAEFRDPLGYIAKIRPIAEKSGICKIRPPADWQPP) form the JmjN domain. One can recognise an ARID domain in the interval 79–169 (TRVKLNYLDQ…IVYPYEMYQS (91 aa)). The span at 197–207 (LRQSVQPSKFN) shows a compositional bias: polar residues. The disordered stretch occupies residues 197–227 (LRQSVQPSKFNSYGRRAKRLQPDPEPTEEDI). Glycyl lysine isopeptide (Lys-Gly) (interchain with G-Cter in SUMO2) cross-links involve residues Lys205, Lys229, Lys244, and Lys274. Residues 284-303 (ESTSPKTFLEGKEELSHSPE) form a disordered region. A Phosphoserine modification is found at Ser287. Lys295 participates in a covalent cross-link: Glycyl lysine isopeptide (Lys-Gly) (interchain with G-Cter in SUMO2). Phosphoserine is present on residues Ser301 and Ser317. The PHD-type 1 zinc finger occupies 326 to 372 (VCRMCSRGDEDDKLLLCDGCDDNYHIFCLLPPLPEIPKGVWRCPKCV). A JmjC domain is found at 468–634 (EYATSGWNLN…AGRQCIEHYR (167 aa)). Residues His514, Asp517, and His602 each contribute to the Fe cation site. Phosphoserine is present on residues Ser893 and Ser897. Lys1127 participates in a covalent cross-link: Glycyl lysine isopeptide (Lys-Gly) (interchain with G-Cter in SUMO2). The PHD-type 2 zinc finger occupies 1187 to 1248 (ICVCGQVPAG…DTKFLCPLCM (62 aa)). Disordered regions lie at residues 1319–1364 (SKPE…EGSG) and 1437–1535 (AERH…APFS). Position 1353 is a phosphoserine (Ser1353). Over residues 1442 to 1457 (SRTRGRALERRRRRKV) the composition is skewed to basic residues. Basic and acidic residues predominate over residues 1458–1475 (DRGGEPDDPAREELEPKR). The segment covering 1482 to 1497 (EAEEVQEEEELEEETG) has biased composition (acidic residues).

Belongs to the JARID1 histone demethylase family. In terms of assembly, part of two distinct complexes, one containing E2F6, and the other containing REST. Interacts with ZMYND8. Fe(2+) is required as a cofactor.

It is found in the nucleus. The catalysed reaction is N(6),N(6),N(6)-trimethyl-L-lysyl(4)-[histone H3] + 3 2-oxoglutarate + 3 O2 = L-lysyl(4)-[histone H3] + 3 formaldehyde + 3 succinate + 3 CO2. Functionally, histone demethylase that specifically demethylates 'Lys-4' of histone H3, thereby playing a central role in histone code. Does not demethylate histone H3 'Lys-9', H3 'Lys-27', H3 'Lys-36', H3 'Lys-79' or H4 'Lys-20'. Demethylates trimethylated and dimethylated but not monomethylated H3 'Lys-4'. Participates in transcriptional repression of neuronal genes by recruiting histone deacetylases and REST at neuron-restrictive silencer elements. Represses the CLOCK-BMAL1 heterodimer-mediated transcriptional activation of the core clock component PER2. This chain is Lysine-specific demethylase 5C (Kdm5c), found in Mus musculus (Mouse).